Reading from the N-terminus, the 158-residue chain is NADPH-dependent 7-cyano-7-deazaguanine reductase (158 aa).

The active-site Thioimide intermediate is Cys56. The active-site Proton donor is the Asp63. Substrate contacts are provided by residues 78–80 (LES) and 97–98 (HE).

It belongs to the GTP cyclohydrolase I family. QueF type 1 subfamily.

The protein resides in the cytoplasm. It carries out the reaction 7-aminomethyl-7-carbaguanine + 2 NADP(+) = 7-cyano-7-deazaguanine + 2 NADPH + 3 H(+). It functions in the pathway tRNA modification; tRNA-queuosine biosynthesis. Catalyzes the NADPH-dependent reduction of 7-cyano-7-deazaguanine (preQ0) to 7-aminomethyl-7-deazaguanine (preQ1). The polypeptide is NADPH-dependent 7-cyano-7-deazaguanine reductase (Nitrobacter hamburgensis (strain DSM 10229 / NCIMB 13809 / X14)).